The primary structure comprises 81 residues: Costars family protein ABRACL (81 aa).

This sequence belongs to the costars family.

This chain is Costars family protein ABRACL, found in Salmo salar (Atlantic salmon).